The chain runs to 331 residues: Hydroxysteroid dehydrogenase-like protein 1 (331 aa).

Residues 2 to 82 (AAVDRFNLLY…TGSTDGIGKA (81 aa)) form a required for mitochondria translocation region. Residues 74-80 (GSTDGIG) and Asp-125 each bind NADP(+). Ser-205 contacts substrate. Tyr-218 serves as the catalytic Proton acceptor. Lys-222 contributes to the NADP(+) binding site.

The protein belongs to the short-chain dehydrogenases/reductases (SDR) family. 17-beta-HSD 3 subfamily.

Its subcellular location is the mitochondrion. May catalyze the metabolism of steroid hormones and thus play an important role in sex differentiation, the emergence and maintenance of the secondary sexual characters, and the regulation of endocrine. The polypeptide is Hydroxysteroid dehydrogenase-like protein 1 (HSDL1) (Gallus gallus (Chicken)).